Here is an 892-residue protein sequence, read N- to C-terminus: LEAF RUST 10 DISEASE-RESISTANCE LOCUS RECEPTOR-LIKE PROTEIN KINASE-like 2.8 (892 aa).

The first 27 residues, 1–27 (MYYHSLSSYSILFFLFSLFHHLPCASS), serve as a signal peptide directing secretion. Residues 28–496 (NQGLGWCESL…RFIATLVRYT (469 aa)) are Extracellular-facing. N-linked (GlcNAc...) asparagine glycosylation is found at Asn42, Asn71, Asn88, Asn112, Asn186, Asn222, Asn230, Asn286, Asn358, Asn384, Asn407, and Asn458. The chain crosses the membrane as a helical span at residues 497–517 (FIALGALTGVVIVFLVLLCPC). At 518-892 (FRVQIFRKRK…TNSKLESSSL (375 aa)) the chain is on the cytoplasmic side. Thr547 carries the post-translational modification Phosphothreonine. The region spanning 556–854 (KSFTEVVGRG…ALEVPPRPVL (299 aa)) is the Protein kinase domain. ATP-binding positions include 562 to 570 (VGRGGFGIV) and Lys584. Tyr629 is modified (phosphotyrosine). Asp680 acts as the Proton acceptor in catalysis. Phosphothreonine occurs at positions 717 and 720.

The protein belongs to the protein kinase superfamily. Ser/Thr protein kinase family.

It is found in the membrane. The enzyme catalyses L-seryl-[protein] + ATP = O-phospho-L-seryl-[protein] + ADP + H(+). It carries out the reaction L-threonyl-[protein] + ATP = O-phospho-L-threonyl-[protein] + ADP + H(+). This Arabidopsis thaliana (Mouse-ear cress) protein is LEAF RUST 10 DISEASE-RESISTANCE LOCUS RECEPTOR-LIKE PROTEIN KINASE-like 2.8.